The chain runs to 168 residues: Large ribosomal subunit protein uL5 (168 aa).

Belongs to the universal ribosomal protein uL5 family. In terms of assembly, part of the 50S ribosomal subunit; contacts the 5S rRNA and probably tRNA. Forms a bridge to the 30S subunit in the 70S ribosome.

In terms of biological role, this is one of the proteins that bind and probably mediate the attachment of the 5S RNA into the large ribosomal subunit, where it forms part of the central protuberance. In the 70S ribosome it contacts protein S13 of the 30S subunit (bridge B1b), connecting the 2 subunits; this bridge is implicated in subunit movement. May contact the P site tRNA; the 5S rRNA and some of its associated proteins might help stabilize positioning of ribosome-bound tRNAs. The polypeptide is Large ribosomal subunit protein uL5 (Methanospirillum hungatei JF-1 (strain ATCC 27890 / DSM 864 / NBRC 100397 / JF-1)).